Consider the following 228-residue polypeptide: Urease accessory protein UreF (228 aa).

The protein belongs to the UreF family. In terms of assembly, ureD, UreF and UreG form a complex that acts as a GTP-hydrolysis-dependent molecular chaperone, activating the urease apoprotein by helping to assemble the nickel containing metallocenter of UreC. The UreE protein probably delivers the nickel.

It localises to the cytoplasm. Required for maturation of urease via the functional incorporation of the urease nickel metallocenter. The protein is Urease accessory protein UreF of Dechloromonas aromatica (strain RCB).